The primary structure comprises 541 residues: Chaperonin GroEL (541 aa).

Residues 29-32 (TLGP), 86-90 (DGTTT), Gly413, 476-478 (NAA), and Asp492 each bind ATP.

Belongs to the chaperonin (HSP60) family. Forms a cylinder of 14 subunits composed of two heptameric rings stacked back-to-back. Interacts with the co-chaperonin GroES.

It is found in the cytoplasm. The enzyme catalyses ATP + H2O + a folded polypeptide = ADP + phosphate + an unfolded polypeptide.. In terms of biological role, together with its co-chaperonin GroES, plays an essential role in assisting protein folding. The GroEL-GroES system forms a nano-cage that allows encapsulation of the non-native substrate proteins and provides a physical environment optimized to promote and accelerate protein folding. The chain is Chaperonin GroEL from Streptococcus equi subsp. zooepidemicus (strain H70).